The chain runs to 754 residues: 5-methyltetrahydropteroyltriglutamate--homocysteine methyltransferase (754 aa).

Residues 17–20 (RELK) and lysine 117 contribute to the 5-methyltetrahydropteroyltri-L-glutamate site. Residues 431–433 (IGS) and glutamate 484 contribute to the L-homocysteine site. L-methionine contacts are provided by residues 431 to 433 (IGS) and glutamate 484. Residues 515 to 516 (RC) and tryptophan 561 contribute to the 5-methyltetrahydropteroyltri-L-glutamate site. L-homocysteine is bound at residue aspartate 599. Aspartate 599 lines the L-methionine pocket. Glutamate 605 contacts 5-methyltetrahydropteroyltri-L-glutamate. Residues histidine 641, cysteine 643, and glutamate 665 each contribute to the Zn(2+) site. Catalysis depends on histidine 694, which acts as the Proton donor. Zn(2+) is bound at residue cysteine 726.

It belongs to the vitamin-B12 independent methionine synthase family. Zn(2+) serves as cofactor.

The catalysed reaction is 5-methyltetrahydropteroyltri-L-glutamate + L-homocysteine = tetrahydropteroyltri-L-glutamate + L-methionine. It functions in the pathway amino-acid biosynthesis; L-methionine biosynthesis via de novo pathway; L-methionine from L-homocysteine (MetE route): step 1/1. Its function is as follows. Catalyzes the transfer of a methyl group from 5-methyltetrahydrofolate to homocysteine resulting in methionine formation. This Salmonella agona (strain SL483) protein is 5-methyltetrahydropteroyltriglutamate--homocysteine methyltransferase.